We begin with the raw amino-acid sequence, 233 residues long: Large ribosomal subunit protein uL1 (233 aa).

The protein belongs to the universal ribosomal protein uL1 family. As to quaternary structure, part of the 50S ribosomal subunit.

Binds directly to 23S rRNA. The L1 stalk is quite mobile in the ribosome, and is involved in E site tRNA release. Its function is as follows. Protein L1 is also a translational repressor protein, it controls the translation of the L11 operon by binding to its mRNA. In Shewanella halifaxensis (strain HAW-EB4), this protein is Large ribosomal subunit protein uL1.